Consider the following 582-residue polypeptide: UPF0329 protein ECU07_0070 (582 aa).

The segment at 326 to 386 (EEKAKSKKKG…KTGKKSKGDQ (61 aa)) is disordered. A compositionally biased stretch (basic residues) spans 330–339 (KSKKKGKKKS). Positions 344–354 (EAKEEEKKESG) are enriched in basic and acidic residues.

Belongs to the UPF0329 family.

The chain is UPF0329 protein ECU07_0070 from Encephalitozoon cuniculi (strain GB-M1) (Microsporidian parasite).